Here is a 473-residue protein sequence, read N- to C-terminus: Bifunctional protein HldE (473 aa).

The segment at Met-1–Ser-317 is ribokinase. Asn-194–Glu-197 contacts ATP. Asp-263 is an active-site residue. The tract at residues Phe-343–Arg-473 is cytidylyltransferase.

This sequence in the N-terminal section; belongs to the carbohydrate kinase PfkB family. It in the C-terminal section; belongs to the cytidylyltransferase family. As to quaternary structure, homodimer.

It catalyses the reaction D-glycero-beta-D-manno-heptose 7-phosphate + ATP = D-glycero-beta-D-manno-heptose 1,7-bisphosphate + ADP + H(+). It carries out the reaction D-glycero-beta-D-manno-heptose 1-phosphate + ATP + H(+) = ADP-D-glycero-beta-D-manno-heptose + diphosphate. It functions in the pathway nucleotide-sugar biosynthesis; ADP-L-glycero-beta-D-manno-heptose biosynthesis; ADP-L-glycero-beta-D-manno-heptose from D-glycero-beta-D-manno-heptose 7-phosphate: step 1/4. The protein operates within nucleotide-sugar biosynthesis; ADP-L-glycero-beta-D-manno-heptose biosynthesis; ADP-L-glycero-beta-D-manno-heptose from D-glycero-beta-D-manno-heptose 7-phosphate: step 3/4. Functionally, catalyzes the phosphorylation of D-glycero-D-manno-heptose 7-phosphate at the C-1 position to selectively form D-glycero-beta-D-manno-heptose-1,7-bisphosphate. Its function is as follows. Catalyzes the ADP transfer from ATP to D-glycero-beta-D-manno-heptose 1-phosphate, yielding ADP-D-glycero-beta-D-manno-heptose. This is Bifunctional protein HldE from Pseudomonas aeruginosa (strain LESB58).